The primary structure comprises 499 residues: Probable cytosol aminopeptidase (499 aa).

Mn(2+)-binding residues include Lys263 and Asp268. Residue Lys275 is part of the active site. Positions 286, 345, and 347 each coordinate Mn(2+). Arg349 is a catalytic residue.

It belongs to the peptidase M17 family. Requires Mn(2+) as cofactor.

Its subcellular location is the cytoplasm. It carries out the reaction Release of an N-terminal amino acid, Xaa-|-Yaa-, in which Xaa is preferably Leu, but may be other amino acids including Pro although not Arg or Lys, and Yaa may be Pro. Amino acid amides and methyl esters are also readily hydrolyzed, but rates on arylamides are exceedingly low.. The enzyme catalyses Release of an N-terminal amino acid, preferentially leucine, but not glutamic or aspartic acids.. In terms of biological role, presumably involved in the processing and regular turnover of intracellular proteins. Catalyzes the removal of unsubstituted N-terminal amino acids from various peptides. In Chlamydia muridarum (strain MoPn / Nigg), this protein is Probable cytosol aminopeptidase (pepA).